Here is a 354-residue protein sequence, read N- to C-terminus: 3-isopropylmalate dehydrogenase (354 aa).

76–87 (GPRWDSAKERPE) is an NAD(+) binding site. 4 residues coordinate substrate: Arg-94, Arg-104, Arg-130, and Asp-215. Positions 215, 239, and 243 each coordinate Mg(2+). 273 to 285 (GSAPDIAGKNKAN) provides a ligand contact to NAD(+).

Belongs to the isocitrate and isopropylmalate dehydrogenases family. LeuB type 1 subfamily. In terms of assembly, homodimer. Mg(2+) serves as cofactor. Mn(2+) is required as a cofactor.

The protein localises to the cytoplasm. It catalyses the reaction (2R,3S)-3-isopropylmalate + NAD(+) = 4-methyl-2-oxopentanoate + CO2 + NADH. It participates in amino-acid biosynthesis; L-leucine biosynthesis; L-leucine from 3-methyl-2-oxobutanoate: step 3/4. Functionally, catalyzes the oxidation of 3-carboxy-2-hydroxy-4-methylpentanoate (3-isopropylmalate) to 3-carboxy-4-methyl-2-oxopentanoate. The product decarboxylates to 4-methyl-2 oxopentanoate. In Bacillus cereus (strain ATCC 14579 / DSM 31 / CCUG 7414 / JCM 2152 / NBRC 15305 / NCIMB 9373 / NCTC 2599 / NRRL B-3711), this protein is 3-isopropylmalate dehydrogenase.